The chain runs to 426 residues: GATA type zinc finger protein asd-4 (426 aa).

The GATA-type zinc-finger motif lies at 16 to 40; sequence CQNCATSTTPLWRRDEMGQVLCNAC. Disordered stretches follow at residues 70–143 and 159–178; these read RPDL…NPHI and PGFG…MNGE. Residues 104 to 113 show a composition bias toward low complexity; the sequence is PNNPAAAARR. Positions 128 to 138 are enriched in polar residues; that stretch reads SPVSRTGTPNV. A coiled-coil region spans residues 182-292; it reads QTHEQLLAAN…QDNGRHKKIR (111 aa). Residues 306 to 318 show a composition bias toward low complexity; sequence VEPQQPEQQQPAP. The interval 306–426 is disordered; sequence VEPQQPEQQQ…PVEEAPKAES (121 aa). Residues 335–353 are compositionally biased toward pro residues; sequence APAPAPEAAPEQAPAPAPE. The span at 354 to 419 shows a compositional bias: low complexity; it reads PVQEQAQEPE…SEPPTTAPVE (66 aa).

In terms of assembly, homotetramer.

The protein localises to the nucleus. In terms of biological role, transcriptional regulator that functions in sexual development; disruption of asd-4 gene results in agenesis of ascus and ascospore with macroscopically normal fruiting body formation. The GATA-type zinc finger domain binds to DNA sequences from its own promoter region. This Neurospora crassa (strain ATCC 24698 / 74-OR23-1A / CBS 708.71 / DSM 1257 / FGSC 987) protein is GATA type zinc finger protein asd-4 (asd-4).